The following is a 289-amino-acid chain: Phosphoribulokinase (289 aa).

12–20 contributes to the ATP binding site; the sequence is GSSGAGTTT.

Belongs to the phosphoribulokinase family.

It catalyses the reaction D-ribulose 5-phosphate + ATP = D-ribulose 1,5-bisphosphate + ADP + H(+). It functions in the pathway carbohydrate biosynthesis; Calvin cycle. This is Phosphoribulokinase (cbbP) from Rhizobium meliloti (strain 1021) (Ensifer meliloti).